Consider the following 162-residue polypeptide: NADH-quinone oxidoreductase subunit I (162 aa).

4Fe-4S ferredoxin-type domains lie at 53-83 (LRRY…IEAE) and 93-122 (TRYD…EGPN). Cys-63, Cys-66, Cys-69, Cys-73, Cys-102, Cys-105, Cys-108, and Cys-112 together coordinate [4Fe-4S] cluster.

The protein belongs to the complex I 23 kDa subunit family. NDH-1 is composed of 14 different subunits. Subunits NuoA, H, J, K, L, M, N constitute the membrane sector of the complex. [4Fe-4S] cluster is required as a cofactor.

It localises to the cell inner membrane. The catalysed reaction is a quinone + NADH + 5 H(+)(in) = a quinol + NAD(+) + 4 H(+)(out). NDH-1 shuttles electrons from NADH, via FMN and iron-sulfur (Fe-S) centers, to quinones in the respiratory chain. The immediate electron acceptor for the enzyme in this species is believed to be ubiquinone. Couples the redox reaction to proton translocation (for every two electrons transferred, four hydrogen ions are translocated across the cytoplasmic membrane), and thus conserves the redox energy in a proton gradient. This Maricaulis maris (strain MCS10) (Caulobacter maris) protein is NADH-quinone oxidoreductase subunit I.